Reading from the N-terminus, the 433-residue chain is MNYTTQMDAARKGIITKEMEIVSQKEQVDVNELRELIANGQVVIPANKNHKSLSAEGVGKNLRTKINVNLGISRDCKDIEKELEKVRVAIDMKAEAIMDLSNYGKTREFREKVVEMSPAMIGSVPMYDAVGYLEKELKDITEEEFLNVIRQHAIDGVDFITIHAGLTRSVCQKIKNHERLTHIVSRGGSLLFAWMELNNKENPIYTNFDKILDICEEYDVTLSLGDACRPGCIKDSTDGVQIQELVVLGELTKRAWERNVQVMIEGPGHMAIDEIEANVVLEKRLCHGAPFYVLGPLVTDIAPGYDHITSAIGGALACAKGVDFLCYVTPAEHLRLPNLDDMKEGIIAAKIAAHAGDIAKNVKGAREWDNKMSKARADLDWCEMFRLAIDPEKAKRYRDESTPTHEDSCTMCGKMCSMRTVKKILNNEELNLI.

Substrate contacts are provided by residues Asn-69, Met-98, Tyr-127, His-163, 185–187 (SRG), 226–229 (DACR), and Glu-265. His-269 contributes to the Zn(2+) binding site. A substrate-binding site is contributed by Tyr-292. Residue His-333 coordinates Zn(2+). [4Fe-4S] cluster-binding residues include Cys-409, Cys-412, and Cys-416.

This sequence belongs to the ThiC family. [4Fe-4S] cluster is required as a cofactor.

It carries out the reaction 5-amino-1-(5-phospho-beta-D-ribosyl)imidazole + S-adenosyl-L-methionine = 4-amino-2-methyl-5-(phosphooxymethyl)pyrimidine + CO + 5'-deoxyadenosine + formate + L-methionine + 3 H(+). The protein operates within cofactor biosynthesis; thiamine diphosphate biosynthesis. In terms of biological role, catalyzes the synthesis of the hydroxymethylpyrimidine phosphate (HMP-P) moiety of thiamine from aminoimidazole ribotide (AIR) in a radical S-adenosyl-L-methionine (SAM)-dependent reaction. This Clostridioides difficile (strain 630) (Peptoclostridium difficile) protein is Phosphomethylpyrimidine synthase.